The primary structure comprises 115 residues: Holo-[acyl-carrier-protein] synthase (115 aa).

Mg(2+)-binding residues include aspartate 5 and glutamate 51.

This sequence belongs to the P-Pant transferase superfamily. AcpS family. The cofactor is Mg(2+).

The protein localises to the cytoplasm. The catalysed reaction is apo-[ACP] + CoA = holo-[ACP] + adenosine 3',5'-bisphosphate + H(+). Its function is as follows. Transfers the 4'-phosphopantetheine moiety from coenzyme A to a Ser of acyl-carrier-protein. The protein is Holo-[acyl-carrier-protein] synthase of Helicobacter acinonychis (strain Sheeba).